We begin with the raw amino-acid sequence, 525 residues long: MSQDIHAHRILILDFGSQYTQLIARRVREIGVYCEIHPFDMSNEAIIAFAPRGIILAGGPESVHEADSPRAPQAVFDLKVPLFGICYGMQTMAEQMGGKVQGSDLREFGYARVDVVGKARLLDGIEDHVDDDGVLGLDVWMSHGDKVTEMPAGFHILASTPSCPIAAMADDARAYYGVQFHPEVTHTKQGLRILSRFVLDICGCAALWTPSNIVDDAIATVRAQVGSSKVLLGLSGGVDSSVVAALLHKAIGDQLTCVFVDNGLLRLHEGDQVMAMFAENMGVKVIRANAEDKFLGRLAGVADPEEKRKIIGRTFIEVFDEEATKLQDVKFLAQGTIYPDVIESAGAKTGKAHVIKSHHNVGGLPEDMQFELVEPLRELFKDEVRKIGLELGLPYDMVYRHPFPGPGLGVRILGEVKKEYADLLRQADHIFIEELRAFDWYHKTSQAFVVFQPVKSVGVVGDGRRYAWVVALRAVETIDFMTARWAHLPYELLEKVSNRIINEIAGISRVTYDVSSKPPATIEWE.

The 199-residue stretch at 9–207 (RILILDFGSQ…VLDICGCAAL (199 aa)) folds into the Glutamine amidotransferase type-1 domain. The Nucleophile role is filled by Cys86. Residues His181 and Glu183 contribute to the active site. The region spanning 208–400 (WTPSNIVDDA…LGLPYDMVYR (193 aa)) is the GMPS ATP-PPase domain. 235–241 (SGGVDSS) is an ATP binding site.

Homodimer.

It carries out the reaction XMP + L-glutamine + ATP + H2O = GMP + L-glutamate + AMP + diphosphate + 2 H(+). It functions in the pathway purine metabolism; GMP biosynthesis; GMP from XMP (L-Gln route): step 1/1. Functionally, catalyzes the synthesis of GMP from XMP. The protein is GMP synthase [glutamine-hydrolyzing] of Pseudomonas aeruginosa (strain LESB58).